Here is a 290-residue protein sequence, read N- to C-terminus: Acetyl-coenzyme A carboxylase carboxyl transferase subunit beta (290 aa).

Residues 27–290 form the CoA carboxyltransferase N-terminal domain; that stretch reads LWVKCPSCEA…LQRQPADALA (264 aa). Residues Cys-31, Cys-34, Cys-50, and Cys-53 each contribute to the Zn(2+) site. A C4-type zinc finger spans residues 31–53; sequence CPSCEAVLYRNDVDANLHVCPKC.

This sequence belongs to the AccD/PCCB family. As to quaternary structure, acetyl-CoA carboxylase is a heterohexamer composed of biotin carboxyl carrier protein (AccB), biotin carboxylase (AccC) and two subunits each of ACCase subunit alpha (AccA) and ACCase subunit beta (AccD). The cofactor is Zn(2+).

It localises to the cytoplasm. The enzyme catalyses N(6)-carboxybiotinyl-L-lysyl-[protein] + acetyl-CoA = N(6)-biotinyl-L-lysyl-[protein] + malonyl-CoA. It functions in the pathway lipid metabolism; malonyl-CoA biosynthesis; malonyl-CoA from acetyl-CoA: step 1/1. Component of the acetyl coenzyme A carboxylase (ACC) complex. Biotin carboxylase (BC) catalyzes the carboxylation of biotin on its carrier protein (BCCP) and then the CO(2) group is transferred by the transcarboxylase to acetyl-CoA to form malonyl-CoA. The protein is Acetyl-coenzyme A carboxylase carboxyl transferase subunit beta of Burkholderia cenocepacia (strain ATCC BAA-245 / DSM 16553 / LMG 16656 / NCTC 13227 / J2315 / CF5610) (Burkholderia cepacia (strain J2315)).